A 116-amino-acid polypeptide reads, in one-letter code: Putative UPF0320 protein YLL065W (116 aa).

The protein belongs to the UPF0320 family.

In Saccharomyces cerevisiae (strain ATCC 204508 / S288c) (Baker's yeast), this protein is Putative UPF0320 protein YLL065W.